The sequence spans 367 residues: DNA replication and repair protein RecF (367 aa).

30–37 (GNNAQGKT) is a binding site for ATP.

The protein belongs to the RecF family.

It is found in the cytoplasm. The RecF protein is involved in DNA metabolism; it is required for DNA replication and normal SOS inducibility. RecF binds preferentially to single-stranded, linear DNA. It also seems to bind ATP. This Clostridium tetani (strain Massachusetts / E88) protein is DNA replication and repair protein RecF.